The sequence spans 479 residues: Nuclear envelope integral membrane protein 2 (479 aa).

The N-terminal stretch at 1–23 is a signal peptide; it reads MEKLAAFILVLTLLCAYWQSAEG. Residue N69 is glycosylated (N-linked (GlcNAc...) asparagine). Helical transmembrane passes span 172 to 192, 203 to 223, 233 to 253, 276 to 296, and 301 to 321; these read LFFY…FLTL, LFLV…QRVL, HWME…AVCY, IVLL…VAVL, and ILPL…SFLA. N-linked (GlcNAc...) asparagine glycosylation is present at N414. Residues 414 to 479 are disordered; the sequence is NSSSSDTQSH…PLDPEDQDFF (66 aa). Positions 438–449 are enriched in low complexity; the sequence is NSPPVLNNLPSP. The segment covering 450–470 has biased composition (pro residues); that stretch reads TIYPPTICPYPPVTYTPQPEP.

This sequence belongs to the NEMP family.

The protein resides in the nucleus inner membrane. Its function is as follows. Contributes to nuclear envelope stiffness in germ cells. Involved in male and female fertility. This Danio rerio (Zebrafish) protein is Nuclear envelope integral membrane protein 2.